A 212-amino-acid polypeptide reads, in one-letter code: Adenylate kinase (212 aa).

14–19 (GSGKGT) provides a ligand contact to ATP. The NMP stretch occupies residues 34–63 (STGDLFRKKISEDSQFAAQIQNYLSSGSYV). Residues T35, R40, 61-63 (SYV), 89-92 (GYPR), and Q96 contribute to the AMP site. The LID stretch occupies residues 126 to 163 (QRLFCQKCQKSYNLLLAKPKNGLKCDLDNTDLITRNDD). Residue R127 coordinates ATP. Zn(2+) contacts are provided by C130 and C133. Residue 136–137 (SY) coordinates ATP. Residues C150 and D153 each contribute to the Zn(2+) site. The AMP site is built by R160 and R171. ATP is bound at residue Q199.

Belongs to the adenylate kinase family. Monomer.

It localises to the cytoplasm. The enzyme catalyses AMP + ATP = 2 ADP. The protein operates within purine metabolism; AMP biosynthesis via salvage pathway; AMP from ADP: step 1/1. Catalyzes the reversible transfer of the terminal phosphate group between ATP and AMP. Plays an important role in cellular energy homeostasis and in adenine nucleotide metabolism. The polypeptide is Adenylate kinase (Mesomycoplasma hyopneumoniae (strain 7448) (Mycoplasma hyopneumoniae)).